A 90-amino-acid polypeptide reads, in one-letter code: Probable Fe(2+)-trafficking protein (90 aa).

It belongs to the Fe(2+)-trafficking protein family.

In terms of biological role, could be a mediator in iron transactions between iron acquisition and iron-requiring processes, such as synthesis and/or repair of Fe-S clusters in biosynthetic enzymes. The polypeptide is Probable Fe(2+)-trafficking protein (Delftia acidovorans (strain DSM 14801 / SPH-1)).